The primary structure comprises 168 residues: Small ribosomal subunit protein uS9 (168 aa).

Residues 1–29 (MAQNEELTAEAVEAEETLTSYTSESTSAE) are compositionally biased toward low complexity. The disordered stretch occupies residues 1 to 36 (MAQNEELTAEAVEAEETLTSYTSESTSAEDAPKKER).

This sequence belongs to the universal ribosomal protein uS9 family.

The protein is Small ribosomal subunit protein uS9 of Paenarthrobacter aurescens (strain TC1).